The sequence spans 194 residues: Peptide deformylase (194 aa).

Fe cation-binding residues include Cys-105 and His-147. The active site involves Glu-148. His-151 lines the Fe cation pocket.

Belongs to the polypeptide deformylase family. Requires Fe(2+) as cofactor.

It carries out the reaction N-terminal N-formyl-L-methionyl-[peptide] + H2O = N-terminal L-methionyl-[peptide] + formate. Removes the formyl group from the N-terminal Met of newly synthesized proteins. Requires at least a dipeptide for an efficient rate of reaction. N-terminal L-methionine is a prerequisite for activity but the enzyme has broad specificity at other positions. The polypeptide is Peptide deformylase (Flavobacterium psychrophilum (strain ATCC 49511 / DSM 21280 / CIP 103535 / JIP02/86)).